A 244-amino-acid polypeptide reads, in one-letter code: tRNA (guanine-N(1)-)-methyltransferase (244 aa).

Residues G113 and 133–138 each bind S-adenosyl-L-methionine; that span reads IGDYVL.

It belongs to the RNA methyltransferase TrmD family. As to quaternary structure, homodimer.

It localises to the cytoplasm. The enzyme catalyses guanosine(37) in tRNA + S-adenosyl-L-methionine = N(1)-methylguanosine(37) in tRNA + S-adenosyl-L-homocysteine + H(+). Functionally, specifically methylates guanosine-37 in various tRNAs. This Bacillus anthracis (strain A0248) protein is tRNA (guanine-N(1)-)-methyltransferase.